The primary structure comprises 358 residues: Probable aminomethyltransferase (358 aa).

The protein belongs to the GcvT family. As to quaternary structure, the glycine cleavage system is composed of four proteins: P, T, L and H.

The enzyme catalyses N(6)-[(R)-S(8)-aminomethyldihydrolipoyl]-L-lysyl-[protein] + (6S)-5,6,7,8-tetrahydrofolate = N(6)-[(R)-dihydrolipoyl]-L-lysyl-[protein] + (6R)-5,10-methylene-5,6,7,8-tetrahydrofolate + NH4(+). In terms of biological role, the glycine cleavage system catalyzes the degradation of glycine. This chain is Probable aminomethyltransferase, found in Natronomonas pharaonis (strain ATCC 35678 / DSM 2160 / CIP 103997 / JCM 8858 / NBRC 14720 / NCIMB 2260 / Gabara) (Halobacterium pharaonis).